A 235-amino-acid polypeptide reads, in one-letter code: RING-H2 finger protein ATL17 (235 aa).

Residues 1–21 (MLTTTILILLIVILMVSLHLY) traverse the membrane as a helical segment. The RING-type; atypical zinc-finger motif lies at 76–118 (CSVCLSEFKDNESGRVMPNCKHTFHVHCIDMWFHSHSSCPLCR). Positions 143–167 (VYGDTNHHEGTETTGDSVPEDSQRK) are disordered.

It belongs to the RING-type zinc finger family. ATL subfamily.

It is found in the membrane. The catalysed reaction is S-ubiquitinyl-[E2 ubiquitin-conjugating enzyme]-L-cysteine + [acceptor protein]-L-lysine = [E2 ubiquitin-conjugating enzyme]-L-cysteine + N(6)-ubiquitinyl-[acceptor protein]-L-lysine.. The protein operates within protein modification; protein ubiquitination. In terms of biological role, may be involved in the early steps of the plant defense signaling pathway. The protein is RING-H2 finger protein ATL17 (ATL17) of Arabidopsis thaliana (Mouse-ear cress).